Reading from the N-terminus, the 220-residue chain is DNA replication complex GINS protein SLD5 (220 aa).

This sequence belongs to the GINS4/SLD5 family. Component of the GINS complex. Interacts with EOL1 in the nucleus.

The protein resides in the nucleus. The GINS complex plays an essential role in the initiation of DNA replication. Required during embryogenesis. This Arabidopsis thaliana (Mouse-ear cress) protein is DNA replication complex GINS protein SLD5.